The chain runs to 154 residues: Photosystem II extrinsic protein U, chloroplastic (154 aa).

The transit peptide at 1-36 directs the protein to the chloroplast; the sequence is MAFISTPLGKVTVKSATVSANRRGLRMQSDSEPVVS. The transit peptide at 37–61 directs the protein to the thylakoid; the sequence is RRALLSGALAAAVAAALARARPAQA.

This sequence belongs to the PsbU family. PSII is composed of 1 copy each of membrane proteins PsbA, PsbB, PsbC, PsbD, PsbE, PsbF, PsbH, PsbI, PsbJ, PsbK, PsbL, PsbM, PsbT, PsbY, PsbZ, Psb30/Ycf12, at least 3 peripheral proteins of the oxygen-evolving complex and a large number of cofactors. It forms dimeric complexes. The extrinsic subunits in red algae are PsbO (OEC33), PsbQ', cytochrome c-550 and PsbU. In terms of processing, predicted to be translocated into the thylakoid lumen by the Tat system. The position of the first transit peptide cleavage has not been experimentally proven.

It localises to the plastid. It is found in the chloroplast thylakoid membrane. One of the extrinsic, lumenal subunits of photosystem II (PSII). PSII is a light-driven water plastoquinone oxidoreductase, using light energy to abstract electrons from H(2)O, generating a proton gradient subsequently used for ATP formation. The extrinsic proteins stabilize the structure of photosystem II oxygen-evolving complex (OEC), the ion environment of oxygen evolution and protect the OEC against heat-induced inactivation. This is Photosystem II extrinsic protein U, chloroplastic from Cyanidium caldarium (Red alga).